The sequence spans 465 residues: UDP-N-acetylmuramoylalanine--D-glutamate ligase (465 aa).

127 to 133 (GSNGKST) lines the ATP pocket.

The protein belongs to the MurCDEF family.

Its subcellular location is the cytoplasm. The enzyme catalyses UDP-N-acetyl-alpha-D-muramoyl-L-alanine + D-glutamate + ATP = UDP-N-acetyl-alpha-D-muramoyl-L-alanyl-D-glutamate + ADP + phosphate + H(+). Its pathway is cell wall biogenesis; peptidoglycan biosynthesis. Its function is as follows. Cell wall formation. Catalyzes the addition of glutamate to the nucleotide precursor UDP-N-acetylmuramoyl-L-alanine (UMA). This chain is UDP-N-acetylmuramoylalanine--D-glutamate ligase, found in Cereibacter sphaeroides (strain KD131 / KCTC 12085) (Rhodobacter sphaeroides).